The following is a 630-amino-acid chain: Golgi apyrase (630 aa).

Over 1–500 (MLIENTNDRF…RKQSSSLSNK (500 aa)) the chain is Lumenal. E152 serves as the catalytic Proton acceptor. The chain crosses the membrane as a helical span at residues 501 to 517 (GFLMWFAIICCIFYLIF). At 518-630 (HRSHIIRRRF…SKFKDSRLYD (113 aa)) the chain is on the cytoplasmic side. Positions 586–606 (SSATMQREHEPQRTASQSANL) are disordered.

It belongs to the GDA1/CD39 NTPase family. Interacts with activator subunit VMA13 of vacuolar H(+)-ATPase. Interacts with CDC55; this interaction is disrupted by adenovirus E4orf4, which remains associated with both YND1 and CDC55. Ca(2+) is required as a cofactor. Requires Mg(2+) as cofactor. Mn(2+) serves as cofactor.

It is found in the golgi apparatus. The protein resides in the membrane. The catalysed reaction is a ribonucleoside 5'-triphosphate + 2 H2O = a ribonucleoside 5'-phosphate + 2 phosphate + 2 H(+). The protein operates within protein modification; protein glycosylation. With respect to regulation, activity is inhibited both by interaction with VMA13 and by V-ATPase acidification of the lumen. The activity of VMA13 is not required for YND1 inhibition. Its function is as follows. Catalyzes the hydrolysis of phosphoanhydride bonds of nucleoside tri- and di-phosphates. Has equal high activity toward ADP/ATP, GDP/GTP, and UDP/UTP and approximately 50% less toward CDP/CTP and thiamine pyrophosphate. Has no activity toward GMP. Required for Golgi glycosylation and cell wall integrity. Together with CDC55, required for adenovirus E4orf4 (early region 4 open reading frame 4) induced toxicity, the apyrase activity is not required for this function. Plays a role in sphingolipid synthesis. In Saccharomyces cerevisiae (strain ATCC 204508 / S288c) (Baker's yeast), this protein is Golgi apyrase (YND1).